The following is a 318-amino-acid chain: NADH-ubiquinone oxidoreductase chain 1 (318 aa).

8 consecutive transmembrane segments (helical) span residues 2–22 (FLIN…FLTL), 69–89 (FLFT…WAPL), 102–122 (LLFI…SGWA), 146–166 (MTTI…TAFA), 171–191 (HLWL…STLA), 222–242 (LFFM…VILF), 253–273 (EIST…FLWV), and 294–314 (LPLT…LACI).

Belongs to the complex I subunit 1 family.

It is found in the mitochondrion inner membrane. It carries out the reaction a ubiquinone + NADH + 5 H(+)(in) = a ubiquinol + NAD(+) + 4 H(+)(out). In terms of biological role, core subunit of the mitochondrial membrane respiratory chain NADH dehydrogenase (Complex I) that is believed to belong to the minimal assembly required for catalysis. Complex I functions in the transfer of electrons from NADH to the respiratory chain. The immediate electron acceptor for the enzyme is believed to be ubiquinone. In Mammuthus primigenius (Siberian woolly mammoth), this protein is NADH-ubiquinone oxidoreductase chain 1 (MT-ND1).